Here is a 222-residue protein sequence, read N- to C-terminus: Glutathione S-transferase (222 aa).

The 81-residue stretch at 3–83 (GKPKLHYTRG…YIAGKYNLYG (81 aa)) folds into the GST N-terminal domain. Glutathione is bound by residues Tyr-9, Arg-45, 54 to 55 (QV), and 67 to 68 (QS). In terms of domain architecture, GST C-terminal spans 85–208 (DLKERAWIDM…QPGSQRKPPL (124 aa)).

This sequence belongs to the GST superfamily. Alpha family. In terms of assembly, homodimer.

It is found in the cytoplasm. The catalysed reaction is RX + glutathione = an S-substituted glutathione + a halide anion + H(+). Functionally, conjugation of reduced glutathione to a wide number of exogenous and endogenous hydrophobic electrophiles. The protein is Glutathione S-transferase of Gallus gallus (Chicken).